The chain runs to 181 residues: Protein Ves (181 aa).

Belongs to the Ves family.

In Cronobacter sakazakii (strain ATCC BAA-894) (Enterobacter sakazakii), this protein is Protein Ves.